Reading from the N-terminus, the 165-residue chain is Shikimate kinase (165 aa).

Residue 11 to 16 (GAGKTT) participates in ATP binding. Thr15 serves as a coordination point for Mg(2+). Residues Asp33, Arg57, and Gly78 each coordinate substrate. Arg116 serves as a coordination point for ATP. Position 134 (Arg134) interacts with substrate.

This sequence belongs to the shikimate kinase family. As to quaternary structure, monomer. Mg(2+) is required as a cofactor.

It localises to the cytoplasm. It catalyses the reaction shikimate + ATP = 3-phosphoshikimate + ADP + H(+). It participates in metabolic intermediate biosynthesis; chorismate biosynthesis; chorismate from D-erythrose 4-phosphate and phosphoenolpyruvate: step 5/7. Functionally, catalyzes the specific phosphorylation of the 3-hydroxyl group of shikimic acid using ATP as a cosubstrate. The polypeptide is Shikimate kinase (Bacillus mycoides (strain KBAB4) (Bacillus weihenstephanensis)).